The sequence spans 446 residues: Phosphoglucosamine mutase (446 aa).

S102 serves as the catalytic Phosphoserine intermediate. S102, D241, D243, and D245 together coordinate Mg(2+). Phosphoserine is present on S102.

The protein belongs to the phosphohexose mutase family. Requires Mg(2+) as cofactor. Activated by phosphorylation.

The catalysed reaction is alpha-D-glucosamine 1-phosphate = D-glucosamine 6-phosphate. Catalyzes the conversion of glucosamine-6-phosphate to glucosamine-1-phosphate. This is Phosphoglucosamine mutase from Xylella fastidiosa (strain M23).